A 127-amino-acid chain; its full sequence is uncharacterized protein (127 aa).

Residues 5-25 traverse the membrane as a helical segment; that stretch reads ILGITIAFIILLLTTVAILFS.

It is found in the membrane. This is an uncharacterized protein from Mycoplasma genitalium (strain ATCC 33530 / DSM 19775 / NCTC 10195 / G37) (Mycoplasmoides genitalium).